A 165-amino-acid polypeptide reads, in one-letter code: Interferon gamma (165 aa).

Residues 1–23 form the signal peptide; sequence MKYTSYILAFQLCIVLGSLGCYC. Gln24 carries the post-translational modification Pyrrolidone carboxylic acid. Residues Asn48 and Asn120 are each glycosylated (N-linked (GlcNAc...) asparagine).

It belongs to the type II (or gamma) interferon family. In terms of assembly, homodimer. Interacts with IFNGR1 (via extracellular domain); this interaction promotes IFNGR1 dimerization. As to expression, released primarily from activated T lymphocytes.

The protein resides in the secreted. Its function is as follows. Type II interferon produced by immune cells such as T-cells and NK cells that plays crucial roles in antimicrobial, antiviral, and antitumor responses by activating effector immune cells and enhancing antigen presentation. Primarily signals through the JAK-STAT pathway after interaction with its receptor IFNGR1 to affect gene regulation. Upon IFNG binding, IFNGR1 intracellular domain opens out to allow association of downstream signaling components JAK2, JAK1 and STAT1, leading to STAT1 activation, nuclear translocation and transcription of IFNG-regulated genes. Many of the induced genes are transcription factors such as IRF1 that are able to further drive regulation of a next wave of transcription. Plays a role in class I antigen presentation pathway by inducing a replacement of catalytic proteasome subunits with immunoproteasome subunits. In turn, increases the quantity, quality, and repertoire of peptides for class I MHC loading. Increases the efficiency of peptide generation also by inducing the expression of activator PA28 that associates with the proteasome and alters its proteolytic cleavage preference. Up-regulates as well MHC II complexes on the cell surface by promoting expression of several key molecules such as cathepsins B/CTSB, H/CTSH, and L/CTSL. Participates in the regulation of hematopoietic stem cells during development and under homeostatic conditions by affecting their development, quiescence, and differentiation. This Cercocebus atys (Sooty mangabey) protein is Interferon gamma (IFNG).